The chain runs to 78 residues: Alpha-amylase inhibitor Haim-1 (78 aa).

Intrachain disulfides connect cysteine 11–cysteine 27 and cysteine 45–cysteine 72.

Its function is as follows. Inhibits mammalian alpha-amylases specifically but has no action on plant and microbial alpha-amylases. This Streptomyces griseosporeus protein is Alpha-amylase inhibitor Haim-1.